We begin with the raw amino-acid sequence, 692 residues long: Methionine--tRNA ligase (692 aa).

Positions 12 to 22 (PYANGSFHIGH) match the 'HIGH' region motif. Residues cysteine 143, cysteine 146, cysteine 156, and cysteine 159 each coordinate Zn(2+). Positions 341 to 345 (KMSKS) match the 'KMSKS' region motif. Lysine 344 contributes to the ATP binding site. The tRNA-binding domain maps to 586 to 692 (DFAKIDLRIA…PGAQPGMRVR (107 aa)).

Belongs to the class-I aminoacyl-tRNA synthetase family. MetG type 1 subfamily. Homodimer. Requires Zn(2+) as cofactor.

The protein localises to the cytoplasm. It catalyses the reaction tRNA(Met) + L-methionine + ATP = L-methionyl-tRNA(Met) + AMP + diphosphate. Is required not only for elongation of protein synthesis but also for the initiation of all mRNA translation through initiator tRNA(fMet) aminoacylation. This is Methionine--tRNA ligase from Bordetella bronchiseptica (strain ATCC BAA-588 / NCTC 13252 / RB50) (Alcaligenes bronchisepticus).